A 291-amino-acid chain; its full sequence is MEMO1 family protein PH1626 (291 aa).

It belongs to the MEMO1 family.

The polypeptide is MEMO1 family protein PH1626 (Pyrococcus horikoshii (strain ATCC 700860 / DSM 12428 / JCM 9974 / NBRC 100139 / OT-3)).